We begin with the raw amino-acid sequence, 50 residues long: Thymosin beta-4 (50 aa).

The disordered stretch occupies residues 1–50 (MLLPATMSDKPDMAEIEKFDKSKLKKTETQEKNPLPSKETIEQEKQAGES). Serine 8 is subject to Phosphoserine. Positions 9-31 (DKPDMAEIEKFDKSKLKKTETQE) are enriched in basic and acidic residues. At lysine 10 the chain carries N6-acetyllysine. Lysine 18 is subject to N6-acetyllysine; alternate. A Glycyl lysine isopeptide (Lys-Gly) (interchain with G-Cter in SUMO2); alternate cross-link involves residue lysine 18. Threonine 29 bears the Phosphothreonine mark. Lysine 32 is subject to N6-acetyllysine. Serine 37 is modified (phosphoserine). Lysine 38 is modified (N6-acetyllysine). A compositionally biased stretch (basic and acidic residues) spans 39–50 (ETIEQEKQAGES). Threonine 40 carries the phosphothreonine modification. Residue lysine 45 is modified to N6-acetyllysine.

This sequence belongs to the thymosin beta family. Identified in a complex composed of ACTA1, COBL, GSN AND TMSB4X. Interacts with SERPINB1. AcSDKP is inactivated by ACE, which removes the dipeptide Lys-Pro from its C-terminus. In terms of tissue distribution, originally found in thymus but it is widely distributed in many tissues.

It is found in the cytoplasm. The protein localises to the cytoskeleton. Its function is as follows. Plays an important role in the organization of the cytoskeleton. Binds to and sequesters actin monomers (G actin) and therefore inhibits actin polymerization. Potent inhibitor of bone marrow derived stem cell differentiation. Acts by inhibits the entry of hematopoietic pluripotent stem cells into the S-phase. The polypeptide is Thymosin beta-4 (Tmsb4x) (Mus musculus (Mouse)).